We begin with the raw amino-acid sequence, 358 residues long: Septin-12 (358 aa).

The interval methionine 1–glutamate 25 is disordered. The span at arginine 6 to serine 18 shows a compositional bias: low complexity. The region spanning methionine 46–glutamate 317 is the Septin-type G domain. The interaction with SEPTIN7 stretch occupies residues methionine 46–histidine 319. The segment at glycine 56–serine 63 is G1 motif. GTP contacts are provided by residues glycine 56 to serine 63, threonine 89, glycine 115, arginine 195 to glutamate 203, glycine 251, and arginine 266. Positions aspartate 112–glycine 115 are G3 motif. Residues alanine 194–aspartate 197 form a G4 motif region. A self-association (via N-terminus) to polymerize octameric septin 12-7-6-2/4-2/4-6-7-12 filaments region spans residues valine 258–phenylalanine 358.

The protein belongs to the TRAFAC class TrmE-Era-EngA-EngB-Septin-like GTPase superfamily. Septin GTPase family. As to quaternary structure, septins polymerize into heterooligomeric protein complexes that form filaments, and can associate with cellular membranes, actin filaments and microtubules. GTPase activity is required for filament formation. Interacts with SEPTIN6 and SEPTIN11. Self-associates. Component of a septin core octameric complex consisting of SEPTIN12, SEPTIN7, SEPTIN6 and SEPTIN2 or SEPTIN4 in the order 12-7-6-2-2-6-7-12 or 12-7-6-4-4-6-7-12 and located in the sperm annulus; the octamer polymerizes into filaments via the SEPTIN12 N- and C-termini; the SEPTIN12:SEPTIN7 association is mediated by the respective GTP-binding domains. Interacts with SPAG4 and LMNB1. Associates with alpha- and beta-tubulins. In terms of tissue distribution, widely expressed. Expressed in lymph node.

Its subcellular location is the cytoplasm. The protein localises to the cytoskeleton. The protein resides in the spindle. It is found in the nucleus. It localises to the cell projection. Its subcellular location is the cilium. The protein localises to the flagellum. Filament-forming cytoskeletal GTPase. Involved in spermatogenesis. Involved in the morphogenesis of sperm heads and the elongation of sperm tails probably implicating the association with alpha- and beta-tubulins. Forms a filamentous structure with SEPTIN7, SEPTIN6, SEPTIN2 and probably SEPTIN4 at the sperm annulus which is required for the structural integrity and motility of the sperm tail during postmeiotic differentiation. May play a role in cytokinesis (Potential). In Homo sapiens (Human), this protein is Septin-12.